The following is a 264-amino-acid chain: MRKPVGSKDGSGVYSRQGLDGYTPANSNTRISTATLPRPEPLRPAASSANLGLNSDRLRLAMVQRLRQMGITDDRVLDAMAAVPRHTFVDEALASRAYEDAALPIGHSQTISQPWVVARMIAAVCEARAPSRVLEVGAGCGYQAAVLAQFVREVHSIERIRGLYELARANLRALRLSTRVRLIYGDGTQGVPGVAPFDAIVVAAAGLAIPQALLNQLAPGGRLIAPEGSTSQRLVLIERTGTASWKRMELEAVRFVPLKAGIQS.

A disordered region spans residues 1–49; that stretch reads MRKPVGSKDGSGVYSRQGLDGYTPANSNTRISTATLPRPEPLRPAASSA. Over residues 24 to 35 the composition is skewed to polar residues; sequence PANSNTRISTAT. Ser112 is an active-site residue.

The protein belongs to the methyltransferase superfamily. L-isoaspartyl/D-aspartyl protein methyltransferase family.

It localises to the cytoplasm. It carries out the reaction [protein]-L-isoaspartate + S-adenosyl-L-methionine = [protein]-L-isoaspartate alpha-methyl ester + S-adenosyl-L-homocysteine. Functionally, catalyzes the methyl esterification of L-isoaspartyl residues in peptides and proteins that result from spontaneous decomposition of normal L-aspartyl and L-asparaginyl residues. It plays a role in the repair and/or degradation of damaged proteins. In Bordetella avium (strain 197N), this protein is Protein-L-isoaspartate O-methyltransferase.